Consider the following 142-residue polypeptide: Cell division protein SepF (142 aa).

It belongs to the SepF family. Homodimer. Interacts with FtsZ.

The protein localises to the cytoplasm. In terms of biological role, cell division protein that is part of the divisome complex and is recruited early to the Z-ring. Probably stimulates Z-ring formation, perhaps through the cross-linking of FtsZ protofilaments. Its function overlaps with FtsA. The protein is Cell division protein SepF of Geobacillus kaustophilus (strain HTA426).